Here is a 512-residue protein sequence, read N- to C-terminus: Probable cytosol aminopeptidase (512 aa).

Residues lysine 281 and aspartate 286 each coordinate Mn(2+). Residue lysine 293 is part of the active site. Residues aspartate 304, aspartate 363, and glutamate 365 each contribute to the Mn(2+) site. Arginine 367 is an active-site residue.

The protein belongs to the peptidase M17 family. Mn(2+) is required as a cofactor.

Its subcellular location is the cytoplasm. It catalyses the reaction Release of an N-terminal amino acid, Xaa-|-Yaa-, in which Xaa is preferably Leu, but may be other amino acids including Pro although not Arg or Lys, and Yaa may be Pro. Amino acid amides and methyl esters are also readily hydrolyzed, but rates on arylamides are exceedingly low.. It carries out the reaction Release of an N-terminal amino acid, preferentially leucine, but not glutamic or aspartic acids.. In terms of biological role, presumably involved in the processing and regular turnover of intracellular proteins. Catalyzes the removal of unsubstituted N-terminal amino acids from various peptides. This is Probable cytosol aminopeptidase from Koribacter versatilis (strain Ellin345).